The sequence spans 295 residues: MANLKEIKRKISSVKNTQKTTNAMKLVSSAKLKRTEELAKRSRVYAAKLTELIEEIAQKMQHASAEGLDNIFFQENNNPKKVDIIFITADKGLCGGFNSQTIKRTSQMIAEYQSKGAKVRLRAIGRKGIDYFKFNNVELDDAIVGLSAAPDYKQSSEFISEVVTSYVNGDTDRIVLVHNGYVNMITQEIREDQILPVDASQLELSTVSTSEMEVEPDDDDTLLDALVKRYVEYSIYYALIDSLAAEHSARMQAMDAATKNAKEMVKDLNVKYNKARQEAITTELIEIISGMESMK.

Belongs to the ATPase gamma chain family. In terms of assembly, F-type ATPases have 2 components, CF(1) - the catalytic core - and CF(0) - the membrane proton channel. CF(1) has five subunits: alpha(3), beta(3), gamma(1), delta(1), epsilon(1). CF(0) has three main subunits: a, b and c.

Its subcellular location is the cell inner membrane. Its function is as follows. Produces ATP from ADP in the presence of a proton gradient across the membrane. The gamma chain is believed to be important in regulating ATPase activity and the flow of protons through the CF(0) complex. This Sulfurovum sp. (strain NBC37-1) protein is ATP synthase gamma chain.